The sequence spans 1274 residues: ABC multidrug transporter E (1274 aa).

The N-linked (GlcNAc...) asparagine glycan is linked to Asn-48. Positions Phe-120–Lys-344 constitute an ABC transmembrane type-1 1 domain. The next 4 membrane-spanning stretches (helical) occupy residues Leu-183 to Val-203, Ser-205 to Ile-225, Ile-280 to Phe-300, and Val-321 to Ile-341. The region spanning Ile-377–Asn-629 is the ABC transporter 1 domain. Gly-412 to Ser-419 contributes to the ATP binding site. Asn-473 and Asn-580 each carry an N-linked (GlcNAc...) asparagine glycan. 2 consecutive transmembrane segments (helical) span residues Val-697 to Phe-717 and Phe-737 to Gly-757. The ABC transmembrane type-1 2 domain maps to Val-697 to Gln-984. N-linked (GlcNAc...) asparagine glycosylation occurs at Asn-792. 3 helical membrane-spanning segments follow: residues Phe-818–Trp-838, Leu-840–Ile-860, and Leu-924–Gly-944. In terms of domain architecture, ABC transporter 2 spans Val-1023–Ser-1269. Asn-1044 carries N-linked (GlcNAc...) asparagine glycosylation. Residue Gly-1057–Thr-1064 participates in ATP binding. Asn-1117 carries N-linked (GlcNAc...) asparagine glycosylation.

Belongs to the ABC transporter superfamily. ABCB family. Multidrug resistance exporter (TC 3.A.1.201) subfamily.

The protein resides in the cell membrane. Its function is as follows. Pleiotropic ABC efflux transporter that may be involved in A.fumigatus adaptation to azoles such as vorizonazole. The polypeptide is ABC multidrug transporter E (Aspergillus fumigatus (strain ATCC MYA-4609 / CBS 101355 / FGSC A1100 / Af293) (Neosartorya fumigata)).